The sequence spans 298 residues: Enoyl-CoA hydratase AKT6-1 (298 aa).

The disordered stretch occupies residues 1–23 (MTFSTTKSVAMSPDDDAPSFDIN).

Belongs to the enoyl-CoA hydratase/isomerase family.

It functions in the pathway mycotoxin biosynthesis. In terms of biological role, enoyl-CoA hydratase; part of the gene clusters that mediate the biosynthesis of the host-selective toxins (HSTs) AK-toxins responsible for Japanese pear black spot disease by the Japanese pear pathotype. AK-toxins are esters of 9,10-epoxy 8-hydroxy 9-methyldecatrienoic acid (EDA). On cellular level, AK-toxins affect plasma membrane of susceptible cells and cause a sudden increase in loss of K(+) after a few minutes of toxin treatment. The acyl-CoA ligase AKT1, the hydrolase AKT2 and enoyl-CoA hydratase AKT3 are all involved in the biosynthesis of the AK-, AF- and ACT-toxin common 9,10-epoxy-8-hydroxy-9-methyl-decatrienoic acid (EDA) structural moiety. Part of the EDA biosynthesis occurs in the peroxisome since these 3 enzymes are localized in peroxisomes. The exact roles of the 3 enzymes, as well as of additional AK-toxin clusters enzymes, including AKT4, AKT6 and AKTS1, have still to be elucidated. The Cytochrome P450 monooxygenase AKT7 on the other side functions to limit production of EDA and AK-toxin, probably via the catalysis of a side reaction of EDA or its precursor. This chain is Enoyl-CoA hydratase AKT6-1, found in Alternaria alternata (Alternaria rot fungus).